The following is a 66-amino-acid chain: uncharacterized protein (66 aa).

Positions 1-19 (MRRLYRHLASFFLLPSCPG) are cleaved as a signal peptide.

This is an uncharacterized protein from Saccharomyces cerevisiae (strain ATCC 204508 / S288c) (Baker's yeast).